The primary structure comprises 257 residues: Imidazole glycerol phosphate synthase subunit HisF (257 aa).

Active-site residues include Asp11 and Asp130.

This sequence belongs to the HisA/HisF family. Heterodimer of HisH and HisF.

The protein localises to the cytoplasm. It carries out the reaction 5-[(5-phospho-1-deoxy-D-ribulos-1-ylimino)methylamino]-1-(5-phospho-beta-D-ribosyl)imidazole-4-carboxamide + L-glutamine = D-erythro-1-(imidazol-4-yl)glycerol 3-phosphate + 5-amino-1-(5-phospho-beta-D-ribosyl)imidazole-4-carboxamide + L-glutamate + H(+). It participates in amino-acid biosynthesis; L-histidine biosynthesis; L-histidine from 5-phospho-alpha-D-ribose 1-diphosphate: step 5/9. Its function is as follows. IGPS catalyzes the conversion of PRFAR and glutamine to IGP, AICAR and glutamate. The HisF subunit catalyzes the cyclization activity that produces IGP and AICAR from PRFAR using the ammonia provided by the HisH subunit. The polypeptide is Imidazole glycerol phosphate synthase subunit HisF (Actinobacillus succinogenes (strain ATCC 55618 / DSM 22257 / CCUG 43843 / 130Z)).